The following is a 284-amino-acid chain: UPF0294 protein VV1_1880 (284 aa).

Belongs to the UPF0294 family.

The protein localises to the cytoplasm. The polypeptide is UPF0294 protein VV1_1880 (Vibrio vulnificus (strain CMCP6)).